The following is a 285-amino-acid chain: Cyclin-Y-like protein 1B (285 aa).

A Cyclin N-terminal domain is found at 111 to 209 (PKRNCIFRHF…CFLELLEFNI (99 aa)).

This sequence belongs to the cyclin family. Cyclin Y subfamily.

In Homo sapiens (Human), this protein is Cyclin-Y-like protein 1B.